Here is a 523-residue protein sequence, read N- to C-terminus: 2-isopropylmalate synthase (523 aa).

Residues 5 to 267 (VIIFDTTLRD…HTAINHQEIW (263 aa)) enclose the Pyruvate carboxyltransferase domain. Residues aspartate 14, histidine 202, histidine 204, and asparagine 238 each coordinate Mn(2+). Residues 392 to 523 (RLDYFSVQSG…QHNENNKETV (132 aa)) form a regulatory domain region.

Belongs to the alpha-IPM synthase/homocitrate synthase family. LeuA type 1 subfamily. In terms of assembly, homodimer. Mn(2+) is required as a cofactor.

It is found in the cytoplasm. It carries out the reaction 3-methyl-2-oxobutanoate + acetyl-CoA + H2O = (2S)-2-isopropylmalate + CoA + H(+). The protein operates within amino-acid biosynthesis; L-leucine biosynthesis; L-leucine from 3-methyl-2-oxobutanoate: step 1/4. In terms of biological role, catalyzes the condensation of the acetyl group of acetyl-CoA with 3-methyl-2-oxobutanoate (2-ketoisovalerate) to form 3-carboxy-3-hydroxy-4-methylpentanoate (2-isopropylmalate). This Escherichia coli O81 (strain ED1a) protein is 2-isopropylmalate synthase.